Consider the following 227-residue polypeptide: Cytochrome c oxidase subunit 2 (227 aa).

The Mitochondrial intermembrane portion of the chain corresponds to 1 to 14 (MAYPFQLGLQDATS). Residues 15 to 45 (PIMEELLHFHDHTLMIVFLISSLVLYIITLM) traverse the membrane as a helical segment. The Mitochondrial matrix portion of the chain corresponds to 46 to 59 (LTTKLTHTSTMDAQ). The helical transmembrane segment at 60-87 (EVETVWTILPAIILILIALPSLRILYMM) threads the bilayer. At 88–227 (DEINNPSLTV…YFETWSAVMV (140 aa)) the chain is on the mitochondrial intermembrane side. The Cu cation site is built by histidine 161, cysteine 196, glutamate 198, cysteine 200, histidine 204, and methionine 207. Glutamate 198 serves as a coordination point for Mg(2+). Tyrosine 218 bears the Phosphotyrosine mark.

This sequence belongs to the cytochrome c oxidase subunit 2 family. In terms of assembly, component of the cytochrome c oxidase (complex IV, CIV), a multisubunit enzyme composed of 14 subunits. The complex is composed of a catalytic core of 3 subunits MT-CO1, MT-CO2 and MT-CO3, encoded in the mitochondrial DNA, and 11 supernumerary subunits COX4I, COX5A, COX5B, COX6A, COX6B, COX6C, COX7A, COX7B, COX7C, COX8 and NDUFA4, which are encoded in the nuclear genome. The complex exists as a monomer or a dimer and forms supercomplexes (SCs) in the inner mitochondrial membrane with NADH-ubiquinone oxidoreductase (complex I, CI) and ubiquinol-cytochrome c oxidoreductase (cytochrome b-c1 complex, complex III, CIII), resulting in different assemblies (supercomplex SCI(1)III(2)IV(1) and megacomplex MCI(2)III(2)IV(2)). Found in a complex with TMEM177, COA6, COX18, COX20, SCO1 and SCO2. Interacts with TMEM177 in a COX20-dependent manner. Interacts with COX20. Interacts with COX16. The cofactor is Cu cation.

It localises to the mitochondrion inner membrane. It carries out the reaction 4 Fe(II)-[cytochrome c] + O2 + 8 H(+)(in) = 4 Fe(III)-[cytochrome c] + 2 H2O + 4 H(+)(out). Component of the cytochrome c oxidase, the last enzyme in the mitochondrial electron transport chain which drives oxidative phosphorylation. The respiratory chain contains 3 multisubunit complexes succinate dehydrogenase (complex II, CII), ubiquinol-cytochrome c oxidoreductase (cytochrome b-c1 complex, complex III, CIII) and cytochrome c oxidase (complex IV, CIV), that cooperate to transfer electrons derived from NADH and succinate to molecular oxygen, creating an electrochemical gradient over the inner membrane that drives transmembrane transport and the ATP synthase. Cytochrome c oxidase is the component of the respiratory chain that catalyzes the reduction of oxygen to water. Electrons originating from reduced cytochrome c in the intermembrane space (IMS) are transferred via the dinuclear copper A center (CU(A)) of subunit 2 and heme A of subunit 1 to the active site in subunit 1, a binuclear center (BNC) formed by heme A3 and copper B (CU(B)). The BNC reduces molecular oxygen to 2 water molecules using 4 electrons from cytochrome c in the IMS and 4 protons from the mitochondrial matrix. The polypeptide is Cytochrome c oxidase subunit 2 (MT-CO2) (Vulpes vulpes (Red fox)).